The primary structure comprises 201 residues: Lymphotoxin-alpha (201 aa).

The first 27 residues, M1–G27, serve as a signal peptide directing secretion. The segment at P23–S52 is disordered. A compositionally biased stretch (polar residues) spans P31 to K51. A THD domain is found at P60–L201. N-linked (GlcNAc...) asparagine glycosylation occurs at N93. A disulfide bond links C117 and C152.

Belongs to the tumor necrosis factor family. As to quaternary structure, homotrimer, and heterotrimer of either two LTB and one LTA subunits or (less prevalent) two LTA and one LTB subunits. Interacts with TNFRSF14.

The protein resides in the secreted. It is found in the membrane. Cytokine that in its homotrimeric form binds to TNFRSF1A/TNFR1, TNFRSF1B/TNFBR and TNFRSF14/HVEM. In its heterotrimeric form with LTB binds to TNFRSF3/LTBR. Lymphotoxin is produced by lymphocytes and is cytotoxic for a wide range of tumor cells in vitro and in vivo. This is Lymphotoxin-alpha (LTA) from Notamacropus eugenii (Tammar wallaby).